The following is a 471-amino-acid chain: Metal tolerance protein C1 (471 aa).

Over 1–78 (MGIIRFQILN…PGEEGEKIFR (78 aa)) the chain is Cytoplasmic. Residues 79–99 (LGLTADIGLSVAKALTGYLCG) form a helical membrane-spanning segment. The Vacuolar portion of the chain corresponds to 100–101 (ST). The helical transmembrane segment at 102-122 (AIIADAAHSVSDVVLSGVALV) threads the bilayer. Topologically, residues 123–144 (SYRAANVPKDKEHPYGHGKFET) are cytoplasmic. A helical transmembrane segment spans residues 145–165 (LGALGISAMLLATGSGIAWHA). Residues 166-192 (LDLLSIALSAAPEVIHSGHHHGIDMNH) are Vacuolar-facing. A helical membrane pass occupies residues 193-213 (PILALTVTIASISIKEGLYWI). The Cytoplasmic segment spans residues 214 to 236 (TKRAGEKQGSGLMMANAWHHRSD). A helical transmembrane segment spans residues 237–257 (AISSLVALVGVGGSILGVNFL). Topologically, residues 258–423 (DPLAGLVVST…RITPHLLHSK (166 aa)) are vacuolar. The chain crosses the membrane as a helical span at residues 424–444 (ILLQIVVAMPSTMSIQDVMIA). The Cytoplasmic portion of the chain corresponds to 445-471 (AEHAEKEILKAAPNVARVSIQLSLNSE).

The protein belongs to the cation diffusion facilitator (CDF) transporter (TC 2.A.4) family.

The protein resides in the vacuole membrane. Involved in sequestration of excess metal in the cytoplasm into vacuoles to maintain metal homeostasis. In Arabidopsis thaliana (Mouse-ear cress), this protein is Metal tolerance protein C1 (MTPC1).